Consider the following 144-residue polypeptide: TSC22 domain family protein 1 (144 aa).

Residues 77–98 (LKEQIKELIEKNSQLEQENNLL) are leucine-zipper. Residues 109–144 (QFQAQLQTGSPPATTQPQGSTQPPAQPASQGSGPTA) form a disordered region.

Belongs to the TSC-22/Dip/Bun family. Forms homodimers. Forms a heterodimer with TSC22D4/THG1. Interacts with histone H1-2. Interacts with GNL3.

It localises to the cytoplasm. It is found in the nucleus. The protein localises to the mitochondrion. Transcriptional repressor. Plays a role in the repression of hematopoietic precursor cell growth. Promotes IL2 deprivation-induced apoptosis in T-lymphocytes, via repression of TSC22D3/GILZ transcription and activation of the caspase cascade. Positively regulates cell death in response to TGFB3 during mammary gland involution. In Bathyergus suillus (Cape dune mole rat), this protein is TSC22 domain family protein 1.